The chain runs to 242 residues: N-alpha-acetyltransferase 60 (242 aa).

Over 1-192 (MTEVVPSSAL…GGHPPWTILD (192 aa)) the chain is Cytoplasmic. The region spanning 13–182 (VSLRLLCHDD…DGFTYVLYIN (170 aa)) is the N-acetyltransferase domain. Y38 provides a ligand contact to substrate. K79 bears the N6-acetyllysine; by autocatalysis mark. Y97 is an active-site residue. L99 provides a ligand contact to substrate. Position 101-103 (101-103 (LGV)) interacts with acetyl-CoA. 3 positions are modified to N6-acetyllysine; by autocatalysis: K105, K109, and K121. 109-114 (KHGIGS) contacts acetyl-CoA. H138 is a catalytic residue. Acetyl-CoA contacts are provided by residues N143 and 150 to 153 (YENR). Residues 162–173 (PYYYSIRGVLKD) are required for homodimerization. Y165 is a substrate binding site. The helical intramembrane region spans 193-236 (YIQHLGSALANLSPCSIPHRIYRQAHSLLCSFLPWSSISTKGGI). The Cytoplasmic portion of the chain corresponds to 237–242 (EYSRTM).

This sequence belongs to the acetyltransferase family. NAA60 subfamily. In terms of assembly, monomer and homodimer; monomer in presence of substrate and homodimer in its absence. Post-translationally, acetylated: autoacetylation is required for optimal acetyltransferase activity.

It is found in the golgi apparatus membrane. The catalysed reaction is N-terminal L-methionyl-[transmembrane protein] + acetyl-CoA = N-terminal N(alpha)-acetyl-L-methionyl-[transmembrane protein] + CoA + H(+). It carries out the reaction L-lysyl-[protein] + acetyl-CoA = N(6)-acetyl-L-lysyl-[protein] + CoA + H(+). In terms of biological role, N-alpha-acetyltransferase that specifically mediates the acetylation of N-terminal residues of the transmembrane proteins, with a strong preference for N-termini facing the cytosol. Displays N-terminal acetyltransferase activity towards a range of N-terminal sequences including those starting with Met-Lys, Met-Val, Met-Ala and Met-Met. Required for normal chromosomal segregation during anaphase. May also show histone acetyltransferase activity; such results are however unclear in vivo and would require additional experimental evidences. The sequence is that of N-alpha-acetyltransferase 60 (Naa60) from Mus musculus (Mouse).